Here is a 183-residue protein sequence, read N- to C-terminus: Glutathione-regulated potassium-efflux system ancillary protein KefG (183 aa).

Belongs to the NAD(P)H dehydrogenase (quinone) family. KefG subfamily. As to quaternary structure, interacts with KefB.

Its subcellular location is the cell inner membrane. It carries out the reaction a quinone + NADH + H(+) = a quinol + NAD(+). The enzyme catalyses a quinone + NADPH + H(+) = a quinol + NADP(+). Functionally, regulatory subunit of a potassium efflux system that confers protection against electrophiles. Required for full activity of KefB. This chain is Glutathione-regulated potassium-efflux system ancillary protein KefG, found in Salmonella enteritidis PT4 (strain P125109).